An 83-amino-acid chain; its full sequence is Putative membrane protein insertion efficiency factor (83 aa).

A disordered region spans residues 64 to 83 (GGFDPVPLKKDKNSKTTHHH).

It belongs to the UPF0161 family.

It is found in the cell membrane. Its function is as follows. Could be involved in insertion of integral membrane proteins into the membrane. This chain is Putative membrane protein insertion efficiency factor, found in Staphylococcus epidermidis (strain ATCC 12228 / FDA PCI 1200).